The chain runs to 187 residues: Ribosome-recycling factor (187 aa).

It belongs to the RRF family.

The protein localises to the cytoplasm. In terms of biological role, responsible for the release of ribosomes from messenger RNA at the termination of protein biosynthesis. May increase the efficiency of translation by recycling ribosomes from one round of translation to another. This is Ribosome-recycling factor from Methylobacterium radiotolerans (strain ATCC 27329 / DSM 1819 / JCM 2831 / NBRC 15690 / NCIMB 10815 / 0-1).